The chain runs to 545 residues: Solute carrier family 22 member 6 (545 aa).

The Cytoplasmic portion of the chain corresponds to 1–9 (MAFNDLLKQ). A helical transmembrane segment spans residues 10-30 (VGGVGRFQLIQVTMVVAPLLL). Topologically, residues 31 to 129 (MASHNTLQNF…LVCSHRAFRQ (99 aa)) are extracellular. Asn-39, Asn-56, Asn-86, Asn-91, and Asn-107 each carry an N-linked (GlcNAc...) asparagine glycan. Residues 130 to 150 (LAQSLFMVGVLLGAMMFGYLA) form a helical membrane-spanning segment. Residues 151–157 (DRLGRRK) are Cytoplasmic-facing. Residues 158–177 (VLILNYLQTAVSGTCAAYAP) traverse the membrane as a helical segment. Residue Asn-178 is glycosylated (N-linked (GlcNAc...) asparagine). At 178–180 (NYT) the chain is on the extracellular side. Residues 181 to 201 (VYCIFRLLSGMSLASIAINCM) traverse the membrane as a helical segment. Over 202 to 218 (TLNMEWMPIHTRAYVGT) the chain is Cytoplasmic. The helical transmembrane segment at 219 to 239 (LIGYVYSLGQFLLAGIAYAVP) threads the bilayer. Over 240–242 (HWR) the chain is Extracellular. A helical membrane pass occupies residues 243 to 263 (HLQLAVSVPFFVAFIYSWFFI). Residues 264 to 331 (ESARWYSSSG…ELLRCPTLRR (68 aa)) lie on the Cytoplasmic side of the membrane. Residues 332 to 352 (LFLCLSMLWFATSFAYYGLVM) traverse the membrane as a helical segment. The Extracellular segment spans residues 353–362 (DLQGFGVSMY). Residues 363–383 (LIQVIFGAVDLPAKFVCFLVI) traverse the membrane as a helical segment. Over 384–389 (NSMGRR) the chain is Cytoplasmic. The helical transmembrane segment at 390-410 (PAQLASLLLAGICILVNGIIP) threads the bilayer. The Extracellular segment spans residues 411–419 (RGHTIIRTS). Residues 420–440 (LAVLGKGCLASSFNCIFLYTG) traverse the membrane as a helical segment. The Cytoplasmic portion of the chain corresponds to 441-450 (ELYPTMIRQT). Residues 451 to 471 (GLGMGSTMARVGSIVSPLISM) form a helical membrane-spanning segment. The Extracellular portion of the chain corresponds to 472–478 (TAEFYPS). The chain crosses the membrane as a helical span at residues 479–499 (IPLFIFGAVPVAASAVTALLP). Over 500 to 545 (ETLGQPLPDTVQDLKSRSRGKQKQQQLEQQKQMIPLQVSTQEKNGL) the chain is Cytoplasmic. The segment at 515 to 545 (SRSRGKQKQQQLEQQKQMIPLQVSTQEKNGL) is disordered. Residues 522-531 (KQQQLEQQKQ) show a composition bias toward low complexity. Residues 536 to 545 (QVSTQEKNGL) are compositionally biased toward polar residues.

Belongs to the major facilitator (TC 2.A.1) superfamily. Organic cation transporter (TC 2.A.1.19) family. In terms of processing, glycosylated. Glycosylation is necessary for proper targeting of the transporter to the plasma membrane. As to expression, expressed in kidney. In kidney, restricted to the proximal convoluted tubule (representing S1 and S2 segments). In brain, expressed in neurons of the cortex cerebri and hippocampus as well as in the ependymal cell layer of the choroid plexus.

The protein localises to the basolateral cell membrane. Its subcellular location is the basal cell membrane. It carries out the reaction (6R)-L-erythro-5,6,7,8-tetrahydrobiopterin(out) + a dicarboxylate(in) = (6R)-L-erythro-5,6,7,8-tetrahydrobiopterin(in) + a dicarboxylate(out). The catalysed reaction is L-erythro-7,8-dihydrobiopterin(out) + a dicarboxylate(in) = L-erythro-7,8-dihydrobiopterin(in) + a dicarboxylate(out). It catalyses the reaction L-sepiapterin(out) + a dicarboxylate(in) = L-sepiapterin(in) + a dicarboxylate(out). The enzyme catalyses prostaglandin F2alpha(out) + a dicarboxylate(in) = prostaglandin F2alpha(in) + a dicarboxylate(out). It carries out the reaction prostaglandin E2(out) + a dicarboxylate(in) = prostaglandin E2(in) + a dicarboxylate(out). The catalysed reaction is 3',5'-cyclic AMP(out) + a dicarboxylate(in) = 3',5'-cyclic AMP(in) + a dicarboxylate(out). It catalyses the reaction 3',5'-cyclic GMP(out) + a dicarboxylate(in) = 3',5'-cyclic GMP(in) + a dicarboxylate(out). The enzyme catalyses urate(out) + a dicarboxylate(in) = urate(in) + a dicarboxylate(out). It carries out the reaction kynurenate(out) + glutarate(in) = kynurenate(in) + glutarate(out). The catalysed reaction is (indol-3-yl)acetate(out) + a dicarboxylate(in) = (indol-3-yl)acetate(in) + a dicarboxylate(out). It catalyses the reaction indoxyl sulfate(out) + a dicarboxylate(in) = indoxyl sulfate(in) + a dicarboxylate(out). The enzyme catalyses N-benzoylglycine(out) + a dicarboxylate(in) = N-benzoylglycine(in) + a dicarboxylate(out). It carries out the reaction 3-carboxy-4-methyl-5-propyl-2-furanpropanoate(out) + a dicarboxylate(in) = 3-carboxy-4-methyl-5-propyl-2-furanpropanoate(in) + a dicarboxylate(out). Its function is as follows. Secondary active transporter that functions as a Na(+)-independent organic anion (OA)/dicarboxylate antiporter where the uptake of one molecule of OA into the cell is coupled with an efflux of one molecule of intracellular dicarboxylate such as 2-oxoglutarate or glutarate. Mediates the uptake of OA across the basolateral side of proximal tubule epithelial cells, thereby contributing to the renal elimination of endogenous OA from the systemic circulation into the urine. Functions as a biopterin transporters involved in the uptake and the secretion of coenzymes tetrahydrobiopterin (BH4), dihydrobiopterin (BH2) and sepiapterin to urine, thereby determining baseline levels of blood biopterins. Transports prostaglandin E2 (PGE2) and prostaglandin F2-alpha (PGF2-alpha) and may contribute to their renal excretion. Involved in the transport of neuroactive tryptophan metabolites kynurenate (KYNA) and xanthurenate (XA). May transport glutamate. Also involved in the disposition of uremic toxins and potentially toxic xenobiotics by the renal organic anion secretory pathway, helping reduce their undesired toxicological effects on the body. Uremic toxins include the indoxyl sulfate (IS), hippurate/N-benzoylglycine (HA), indole acetate (IA) and 3-carboxy-4- methyl-5-propyl-2-furanpropionate(CMPF) and urate. Xenobiotics include the mycotoxin ochratoxin (OTA). May also contribute to the transport of organic compounds in testes across the blood-testis-barrier. This Mus musculus (Mouse) protein is Solute carrier family 22 member 6.